Here is a 605-residue protein sequence, read N- to C-terminus: Elongation factor 4 (605 aa).

The 184-residue stretch at C9–A192 folds into the tr-type G domain. GTP contacts are provided by residues D21–T26 and N139–D142.

The protein belongs to the TRAFAC class translation factor GTPase superfamily. Classic translation factor GTPase family. LepA subfamily.

The protein localises to the cell inner membrane. It carries out the reaction GTP + H2O = GDP + phosphate + H(+). In terms of biological role, required for accurate and efficient protein synthesis under certain stress conditions. May act as a fidelity factor of the translation reaction, by catalyzing a one-codon backward translocation of tRNAs on improperly translocated ribosomes. Back-translocation proceeds from a post-translocation (POST) complex to a pre-translocation (PRE) complex, thus giving elongation factor G a second chance to translocate the tRNAs correctly. Binds to ribosomes in a GTP-dependent manner. The protein is Elongation factor 4 of Chlorobium chlorochromatii (strain CaD3).